A 102-amino-acid chain; its full sequence is ATP-dependent Clp protease adapter protein ClpS (102 aa).

The protein belongs to the ClpS family. Binds to the N-terminal domain of the chaperone ClpA.

Functionally, involved in the modulation of the specificity of the ClpAP-mediated ATP-dependent protein degradation. The sequence is that of ATP-dependent Clp protease adapter protein ClpS from Shewanella pealeana (strain ATCC 700345 / ANG-SQ1).